Consider the following 470-residue polypeptide: ATP synthase subunit beta (470 aa).

158 to 165 contributes to the ATP binding site; sequence GGAGVGKT.

Belongs to the ATPase alpha/beta chains family. In terms of assembly, F-type ATPases have 2 components, CF(1) - the catalytic core - and CF(0) - the membrane proton channel. CF(1) has five subunits: alpha(3), beta(3), gamma(1), delta(1), epsilon(1). CF(0) has three main subunits: a(1), b(2) and c(9-12). The alpha and beta chains form an alternating ring which encloses part of the gamma chain. CF(1) is attached to CF(0) by a central stalk formed by the gamma and epsilon chains, while a peripheral stalk is formed by the delta and b chains.

It localises to the cell membrane. The catalysed reaction is ATP + H2O + 4 H(+)(in) = ADP + phosphate + 5 H(+)(out). Its function is as follows. Produces ATP from ADP in the presence of a proton gradient across the membrane. The catalytic sites are hosted primarily by the beta subunits. This chain is ATP synthase subunit beta, found in Shouchella clausii (strain KSM-K16) (Alkalihalobacillus clausii).